The chain runs to 304 residues: N-acetylmuramic acid 6-phosphate etherase (304 aa).

Residues 58-221 (IAERIHRGGR…STGVMIKLGK (164 aa)) enclose the SIS domain. Catalysis depends on Glu86, which acts as the Proton donor. Glu117 is a catalytic residue.

Belongs to the GCKR-like family. MurNAc-6-P etherase subfamily. In terms of assembly, homodimer.

The enzyme catalyses N-acetyl-D-muramate 6-phosphate + H2O = N-acetyl-D-glucosamine 6-phosphate + (R)-lactate. It participates in amino-sugar metabolism; N-acetylmuramate degradation. Its function is as follows. Specifically catalyzes the cleavage of the D-lactyl ether substituent of MurNAc 6-phosphate, producing GlcNAc 6-phosphate and D-lactate. The protein is N-acetylmuramic acid 6-phosphate etherase of Clostridium beijerinckii (strain ATCC 51743 / NCIMB 8052) (Clostridium acetobutylicum).